The following is a 315-amino-acid chain: NADH-cytochrome b5 reductase-like (315 aa).

The region spanning 19-55 (RPTEPLPSQCCGSGCSPCVFDLYHRDLARWEAAQASK) is the Oxidoreductase-like domain. Residues 75–177 (ETFVAFCIIA…RGPFGDFFYK (103 aa)) enclose the FAD-binding FR-type domain. Residues 157-172 (ESWRVGDTAFWRGPFG) and 182-214 (GELLLLAAGTGLAPMVPILQSITDNENDETFVT) each bind FAD.

The protein belongs to the flavoprotein pyridine nucleotide cytochrome reductase family. The cofactor is FAD.

The catalysed reaction is 2 Fe(III)-[cytochrome b5] + NADH = 2 Fe(II)-[cytochrome b5] + NAD(+) + H(+). Functionally, NADH-cytochrome b5 reductases are involved in desaturation and elongation of fatty acids, cholesterol biosynthesis, drug metabolism, and, in erythrocyte, methemoglobin reduction. This is NADH-cytochrome b5 reductase-like (CYB5RL) from Homo sapiens (Human).